The chain runs to 182 residues: Large ribosomal subunit protein uL13 (182 aa).

It belongs to the universal ribosomal protein uL13 family. As to quaternary structure, part of the 50S ribosomal subunit.

In terms of biological role, this protein is one of the early assembly proteins of the 50S ribosomal subunit, although it is not seen to bind rRNA by itself. It is important during the early stages of 50S assembly. This Pyrobaculum neutrophilum (strain DSM 2338 / JCM 9278 / NBRC 100436 / V24Sta) (Thermoproteus neutrophilus) protein is Large ribosomal subunit protein uL13.